We begin with the raw amino-acid sequence, 221 residues long: Probable septum site-determining protein MinC (221 aa).

Belongs to the MinC family. In terms of assembly, interacts with MinD and FtsZ.

Cell division inhibitor that blocks the formation of polar Z ring septums. Rapidly oscillates between the poles of the cell to destabilize FtsZ filaments that have formed before they mature into polar Z rings. Prevents FtsZ polymerization. The sequence is that of Probable septum site-determining protein MinC from Aliivibrio fischeri (strain ATCC 700601 / ES114) (Vibrio fischeri).